Consider the following 425-residue polypeptide: Glucose-6-phosphate 1-dehydrogenase (425 aa).

NADP(+) contacts are provided by Arg-44 and Lys-135. Substrate-binding residues include His-165, Lys-169, Glu-201, and Asp-220. The Proton acceptor role is filled by His-225. Residue Lys-311 participates in substrate binding.

It belongs to the glucose-6-phosphate dehydrogenase family.

The enzyme catalyses D-glucose 6-phosphate + NADP(+) = 6-phospho-D-glucono-1,5-lactone + NADPH + H(+). Its pathway is carbohydrate degradation; pentose phosphate pathway; D-ribulose 5-phosphate from D-glucose 6-phosphate (oxidative stage): step 1/3. Its function is as follows. Catalyzes the oxidation of glucose 6-phosphate to 6-phosphogluconolactone. The chain is Glucose-6-phosphate 1-dehydrogenase from Helicobacter pylori (strain ATCC 700392 / 26695) (Campylobacter pylori).